Consider the following 83-residue polypeptide: Glutaredoxin 3 (83 aa).

Residues 2–83 (ANVEIYTKET…ARGGLDPLLK (82 aa)) enclose the Glutaredoxin domain. Cys12 and Cys15 are oxidised to a cystine.

Belongs to the glutaredoxin family. As to quaternary structure, monomer.

Its function is as follows. The disulfide bond functions as an electron carrier in the glutathione-dependent synthesis of deoxyribonucleotides by the enzyme ribonucleotide reductase. In addition, it is also involved in reducing some disulfides in a coupled system with glutathione reductase. This Escherichia coli O157:H7 protein is Glutaredoxin 3 (grxC).